The chain runs to 295 residues: Accessory protein VasW (295 aa).

Functionally, plays an accessory role in VasX-mediated bacterial killing. This chain is Accessory protein VasW, found in Vibrio cholerae serotype O1 (strain ATCC 39315 / El Tor Inaba N16961).